The chain runs to 140 residues: Profilin-2 (140 aa).

Ala-2 is subject to N-acetylalanine.

Belongs to the profilin family. In terms of assembly, occurs in many kinds of cells as a complex with monomeric actin in a 1:1 ratio. Interacts with PFN2. Interacts with ACTMAP (via N-terminus); the interaction may facilitate efficient cleavage of the acetylated N-terminus of immature actin by ACTMAP.

It is found in the cytoplasm. The protein localises to the cytoskeleton. Functionally, binds to actin and affects the structure of the cytoskeleton. At high concentrations, profilin prevents the polymerization of actin, whereas it enhances it at low concentrations. By binding to PIP2, it inhibits the formation of IP3 and DG. This is Profilin-2 (PFN2) from Bos taurus (Bovine).